We begin with the raw amino-acid sequence, 153 residues long: Bacteriohemerythrin (153 aa).

Fe cation-binding residues include His-21, His-57, Glu-61, His-76, His-80, His-115, and Asp-120.

Belongs to the hemerythrin family. In terms of assembly, monomer.

Functionally, oxygen-binding protein. May be involved in a storage mechanism or for delivery to oxygen-requiring enzymes. The oxygen-binding site contains two iron atoms. This chain is Bacteriohemerythrin, found in Pseudomonas aeruginosa (strain UCBPP-PA14).